A 483-amino-acid chain; its full sequence is Spore germination protein B1 (483 aa).

5 helical membrane passes run isoleucine 289–leucine 309, leucine 323–isoleucine 343, proline 353–alanine 373, isoleucine 375–proline 395, and valine 410–isoleucine 430.

It belongs to the GerABKA family.

It is found in the cell membrane. Its function is as follows. Involved in the response to the germinative mixture of L-asparagine, glucose, fructose and potassium ions (AGFK). Cannot stimulate germination in the absence of gerD and gerK gene products (fructose and glucose receptors respectively). The chain is Spore germination protein B1 (gerBA) from Bacillus subtilis (strain 168).